The sequence spans 233 residues: 2,3,4,5-tetrahydropyridine-2,6-dicarboxylate N-acetyltransferase (233 aa).

It belongs to the transferase hexapeptide repeat family. DapH subfamily.

The catalysed reaction is (S)-2,3,4,5-tetrahydrodipicolinate + acetyl-CoA + H2O = L-2-acetamido-6-oxoheptanedioate + CoA. It participates in amino-acid biosynthesis; L-lysine biosynthesis via DAP pathway; LL-2,6-diaminopimelate from (S)-tetrahydrodipicolinate (acetylase route): step 1/3. Its function is as follows. Catalyzes the transfer of an acetyl group from acetyl-CoA to tetrahydrodipicolinate. The polypeptide is 2,3,4,5-tetrahydropyridine-2,6-dicarboxylate N-acetyltransferase (Enterococcus faecalis (strain ATCC 700802 / V583)).